We begin with the raw amino-acid sequence, 388 residues long: Carbamoyl phosphate synthase small chain (388 aa).

The segment at 1–192 (MPLSDAMPAL…FNPDGTVKNG (192 aa)) is CPSase. L-glutamine contacts are provided by Ser51, Gly244, and Gly246. Positions 196-382 (TVVALDFGVK…VHQMRTTKQA (187 aa)) constitute a Glutamine amidotransferase type-1 domain. Residue Cys272 is the Nucleophile of the active site. Met273, Gln276, Asn312, and Phe315 together coordinate L-glutamine. Residues His355 and Glu357 contribute to the active site.

This sequence belongs to the CarA family. As to quaternary structure, composed of two chains; the small (or glutamine) chain promotes the hydrolysis of glutamine to ammonia, which is used by the large (or ammonia) chain to synthesize carbamoyl phosphate. Tetramer of heterodimers (alpha,beta)4.

The catalysed reaction is hydrogencarbonate + L-glutamine + 2 ATP + H2O = carbamoyl phosphate + L-glutamate + 2 ADP + phosphate + 2 H(+). The enzyme catalyses L-glutamine + H2O = L-glutamate + NH4(+). The protein operates within amino-acid biosynthesis; L-arginine biosynthesis; carbamoyl phosphate from bicarbonate: step 1/1. It participates in pyrimidine metabolism; UMP biosynthesis via de novo pathway; (S)-dihydroorotate from bicarbonate: step 1/3. Small subunit of the glutamine-dependent carbamoyl phosphate synthetase (CPSase). CPSase catalyzes the formation of carbamoyl phosphate from the ammonia moiety of glutamine, carbonate, and phosphate donated by ATP, constituting the first step of 2 biosynthetic pathways, one leading to arginine and/or urea and the other to pyrimidine nucleotides. The small subunit (glutamine amidotransferase) binds and cleaves glutamine to supply the large subunit with the substrate ammonia. This Nostoc sp. (strain PCC 7120 / SAG 25.82 / UTEX 2576) protein is Carbamoyl phosphate synthase small chain.